Consider the following 63-residue polypeptide: Cypmaclein (63 aa).

Belongs to the GASA family. In terms of tissue distribution, expressed in pollen (at protein level).

This Cupressus sempervirens (Italian cypress) protein is Cypmaclein.